Here is a 124-residue protein sequence, read N- to C-terminus: Ribonuclease pancreatic (124 aa).

The segment at 1–21 (AESSAMKFQRQHMDSDGHPDT) is disordered. Residues lysine 7 and arginine 10 each coordinate substrate. The Proton acceptor role is filled by histidine 12. 4 disulfides stabilise this stretch: cysteine 26–cysteine 84, cysteine 40–cysteine 95, cysteine 58–cysteine 110, and cysteine 65–cysteine 72. Residues 41–45 (KPVNT), lysine 66, and arginine 85 contribute to the substrate site. Catalysis depends on histidine 119, which acts as the Proton donor.

Belongs to the pancreatic ribonuclease family. In terms of assembly, monomer. Interacts with and forms tight 1:1 complexes with RNH1. Dimerization of two such complexes may occur. Interaction with RNH1 inhibits this protein. Pancreas.

Its subcellular location is the secreted. It catalyses the reaction an [RNA] containing cytidine + H2O = an [RNA]-3'-cytidine-3'-phosphate + a 5'-hydroxy-ribonucleotide-3'-[RNA].. The catalysed reaction is an [RNA] containing uridine + H2O = an [RNA]-3'-uridine-3'-phosphate + a 5'-hydroxy-ribonucleotide-3'-[RNA].. Its function is as follows. Endonuclease that catalyzes the cleavage of RNA on the 3' side of pyrimidine nucleotides. Acts on single-stranded and double-stranded RNA. The sequence is that of Ribonuclease pancreatic (RNASE1) from Galea musteloides (Common yellow-toothed cavy).